The sequence spans 118 residues: IgW heavy chain V region W26 (118 aa).

Positions 1-109 (NIVLTQPESA…PQWGYWGSGT (109 aa)) constitute an Ig-like domain. A disulfide bond links Cys-22 and Cys-93.

Expressed mainly in lymphoid tissues including spleen, epigonal organ and circulating lymphocytes.

The protein is IgW heavy chain V region W26 of Heterodontus francisci (Horn shark).